Reading from the N-terminus, the 273-residue chain is DnaJ homolog subfamily C member 27 (273 aa).

The segment at 1-18 is required for interaction with MAPK1; sequence MEASMPKRKEPGKSLRIK. Residues 23-30, 71-75, and 134-137 each bind GTP; these read GNAEVGKS, DMAGD, and NKID. The 57-residue stretch at 217-273 folds into the J domain; sequence DSWDMLGVKPGASRDEVNKAYRKLAVLLHPDKCVAPGSEDAFKAVVNARTALLKNIK.

The protein belongs to the small GTPase superfamily. Rab family. In terms of assembly, interacts directly with MAPK1 (wild-type and kinase-deficient forms). Interacts directly (in GTP-bound form) with MAP2K1 (wild-type and kinase-deficient forms).

The protein resides in the nucleus. Its function is as follows. GTPase which can activate the MEK/ERK pathway and induce cell transformation when overexpressed. May act as a nuclear scaffold for MAPK1, probably by association with MAPK1 nuclear export signal leading to enhanced ERK1/ERK2 signaling. The chain is DnaJ homolog subfamily C member 27 (DNAJC27) from Bos taurus (Bovine).